Reading from the N-terminus, the 156-residue chain is 6,7-dimethyl-8-ribityllumazine synthase (156 aa).

Residues F22, 57–59 (AYE), and 81–83 (TVI) each bind 5-amino-6-(D-ribitylamino)uracil. 86-87 (GT) contributes to the (2S)-2-hydroxy-3-oxobutyl phosphate binding site. The active-site Proton donor is the H89. Position 114 (F114) interacts with 5-amino-6-(D-ribitylamino)uracil. Residue R128 coordinates (2S)-2-hydroxy-3-oxobutyl phosphate.

This sequence belongs to the DMRL synthase family. In terms of assembly, forms an icosahedral capsid composed of 60 subunits, arranged as a dodecamer of pentamers.

It carries out the reaction (2S)-2-hydroxy-3-oxobutyl phosphate + 5-amino-6-(D-ribitylamino)uracil = 6,7-dimethyl-8-(1-D-ribityl)lumazine + phosphate + 2 H2O + H(+). Its pathway is cofactor biosynthesis; riboflavin biosynthesis; riboflavin from 2-hydroxy-3-oxobutyl phosphate and 5-amino-6-(D-ribitylamino)uracil: step 1/2. In terms of biological role, catalyzes the formation of 6,7-dimethyl-8-ribityllumazine by condensation of 5-amino-6-(D-ribitylamino)uracil with 3,4-dihydroxy-2-butanone 4-phosphate. This is the penultimate step in the biosynthesis of riboflavin. This Escherichia coli O45:K1 (strain S88 / ExPEC) protein is 6,7-dimethyl-8-ribityllumazine synthase.